The chain runs to 194 residues: ATP-dependent Clp protease proteolytic subunit 1 (194 aa).

Catalysis depends on Ser-98, which acts as the Nucleophile. His-123 is an active-site residue.

It belongs to the peptidase S14 family. In terms of assembly, fourteen ClpP subunits assemble into 2 heptameric rings which stack back to back to give a disk-like structure with a central cavity, resembling the structure of eukaryotic proteasomes.

The protein localises to the cytoplasm. The enzyme catalyses Hydrolysis of proteins to small peptides in the presence of ATP and magnesium. alpha-casein is the usual test substrate. In the absence of ATP, only oligopeptides shorter than five residues are hydrolyzed (such as succinyl-Leu-Tyr-|-NHMec, and Leu-Tyr-Leu-|-Tyr-Trp, in which cleavage of the -Tyr-|-Leu- and -Tyr-|-Trp bonds also occurs).. Functionally, cleaves peptides in various proteins in a process that requires ATP hydrolysis. Has a chymotrypsin-like activity. Plays a major role in the degradation of misfolded proteins. ClpXP1 is involved in the complete degradation of the Site-2 clipped anti-sigma-W factor RsiW. This results in the release of SigW and the transcription activation of the genes under the control of the sigma-W factor. This Halalkalibacterium halodurans (strain ATCC BAA-125 / DSM 18197 / FERM 7344 / JCM 9153 / C-125) (Bacillus halodurans) protein is ATP-dependent Clp protease proteolytic subunit 1.